The chain runs to 597 residues: Hydrogenase-1 large chain (597 aa).

4 residues coordinate Ni(2+): cysteine 76, cysteine 79, cysteine 576, and cysteine 579.

Belongs to the [NiFe]/[NiFeSe] hydrogenase large subunit family. As to quaternary structure, heterodimer of a large and a small subunit. Ni(2+) is required as a cofactor.

It localises to the cell membrane. It catalyses the reaction H2 + A = AH2. The polypeptide is Hydrogenase-1 large chain (hyaB) (Citrobacter freundii).